Reading from the N-terminus, the 107-residue chain is U1-lycotoxin-Ls1c (107 aa).

Positions 1-20 (MMKVLVVVALLVTLISYSSS) are cleaved as a signal peptide. Positions 21-41 (EGIDDLEADELLSLMANEQTR) are excised as a propeptide. Disulfide bonds link cysteine 44/cysteine 59, cysteine 51/cysteine 68, cysteine 58/cysteine 86, and cysteine 70/cysteine 84.

The protein belongs to the neurotoxin 19 (CSTX) family. 04 (U1-Lctx) subfamily. Expressed by the venom gland.

It localises to the secreted. The polypeptide is U1-lycotoxin-Ls1c (Lycosa singoriensis (Wolf spider)).